We begin with the raw amino-acid sequence, 248 residues long: NAD(P)H-quinone oxidoreductase subunit K 1 (248 aa).

The propeptide occupies 1–2 (MS). Cys-62, Cys-63, Cys-127, and Cys-158 together coordinate [4Fe-4S] cluster. The segment at 228–248 (MGMPVPPALTTSQQKEQLNRG) is disordered. Residues 236-248 (LTTSQQKEQLNRG) show a composition bias toward polar residues.

The protein belongs to the complex I 20 kDa subunit family. In terms of assembly, NDH-1 can be composed of about 15 different subunits; different subcomplexes with different compositions have been identified which probably have different functions. It depends on [4Fe-4S] cluster as a cofactor.

The protein localises to the cellular thylakoid membrane. It carries out the reaction a plastoquinone + NADH + (n+1) H(+)(in) = a plastoquinol + NAD(+) + n H(+)(out). It catalyses the reaction a plastoquinone + NADPH + (n+1) H(+)(in) = a plastoquinol + NADP(+) + n H(+)(out). In terms of biological role, NDH-1 shuttles electrons from an unknown electron donor, via FMN and iron-sulfur (Fe-S) centers, to quinones in the respiratory and/or the photosynthetic chain. The immediate electron acceptor for the enzyme in this species is believed to be plastoquinone. Couples the redox reaction to proton translocation, and thus conserves the redox energy in a proton gradient. Cyanobacterial NDH-1 also plays a role in inorganic carbon-concentration. In Synechocystis sp. (strain ATCC 27184 / PCC 6803 / Kazusa), this protein is NAD(P)H-quinone oxidoreductase subunit K 1.